A 131-amino-acid chain; its full sequence is Probable histone H2A.3 (131 aa).

The tract at residues 1–23 (MAGRGKQLGSGAAKKSTSRSSKA) is disordered. Residues 9–23 (GSGAAKKSTSRSSKA) show a composition bias toward low complexity.

Belongs to the histone H2A family. In terms of assembly, the nucleosome is a histone octamer containing two molecules each of H2A, H2B, H3 and H4 assembled in one H3-H4 heterotetramer and two H2A-H2B heterodimers. The octamer wraps approximately 147 bp of DNA. In terms of processing, not ubiquitinated. Expressed in meristems and dividing cells.

The protein localises to the nucleus. It is found in the chromosome. Its function is as follows. Core component of nucleosome. Nucleosomes wrap and compact DNA into chromatin, limiting DNA accessibility to the cellular machineries which require DNA as a template. Histones thereby play a central role in transcription regulation, DNA repair, DNA replication and chromosomal stability. DNA accessibility is regulated via a complex set of post-translational modifications of histones, also called histone code, and nucleosome remodeling. The sequence is that of Probable histone H2A.3 from Arabidopsis thaliana (Mouse-ear cress).